The primary structure comprises 314 residues: Olfactory receptor 5P68 (314 aa).

The Extracellular portion of the chain corresponds to 1–28 (MAFLHNGNHTAVTEFILLGLTDDPVFRV). Asn-8 carries an N-linked (GlcNAc...) asparagine glycan. A helical membrane pass occupies residues 29 to 49 (ILFTIILCIYLVTVSGNLSTI). Residues 50–57 (LLIRVSSQ) are Cytoplasmic-facing. The chain crosses the membrane as a helical span at residues 58–78 (LHHPMYFFLSHLASVDIGYSS). At 79 to 102 (SVTPNMLANFLVEKNTISYLGCTI) the chain is on the extracellular side. A disulfide bridge connects residues Cys-100 and Cys-192. A helical membrane pass occupies residues 103-123 (QLSLAAFCGTVECFLLATMAY). At 124–136 (DRFMAICSPLLYS) the chain is on the cytoplasmic side. Residues 137–157 (TKMSTQVCIQLIVGSYIGGFL) traverse the membrane as a helical segment. Over 158-199 (NASSFTLFFLSFLFCGPNRINHFYCDFAPLVALSCSDVSVSE) the chain is Extracellular. Residues 200 to 220 (VVTSFFSGSVTMITMLVIAIS) traverse the membrane as a helical segment. Over 221-240 (YTYILITILKMRSTEGRHKA) the chain is Cytoplasmic. The chain crosses the membrane as a helical span at residues 241–261 (FSTCTSHLTAVTLFYGTITFI). Residues 262–274 (YVMPKSSFSTDQN) are Extracellular-facing. A helical membrane pass occupies residues 275 to 295 (KVVSVFYMVVIPMLNPLIYSL). Residues 296–314 (RNNEIKDALKRHLGKKIFS) lie on the Cytoplasmic side of the membrane.

It belongs to the G-protein coupled receptor 1 family.

The protein resides in the cell membrane. Functionally, potential odorant receptor. This Mus musculus (Mouse) protein is Olfactory receptor 5P68.